A 285-amino-acid chain; its full sequence is Diaminopimelate epimerase (285 aa).

Residues Asn15 and Asn68 each coordinate substrate. Cys77 acts as the Proton donor in catalysis. Residues 78-79, Asn165, Asn201, and 219-220 contribute to the substrate site; these read GN and ER. Residue Cys228 is the Proton acceptor of the active site. 229–230 serves as a coordination point for substrate; sequence GT.

It belongs to the diaminopimelate epimerase family. As to quaternary structure, homodimer.

It is found in the cytoplasm. It catalyses the reaction (2S,6S)-2,6-diaminopimelate = meso-2,6-diaminopimelate. Its pathway is amino-acid biosynthesis; L-lysine biosynthesis via DAP pathway; DL-2,6-diaminopimelate from LL-2,6-diaminopimelate: step 1/1. Its function is as follows. Catalyzes the stereoinversion of LL-2,6-diaminopimelate (L,L-DAP) to meso-diaminopimelate (meso-DAP), a precursor of L-lysine and an essential component of the bacterial peptidoglycan. The polypeptide is Diaminopimelate epimerase (Synechococcus sp. (strain JA-3-3Ab) (Cyanobacteria bacterium Yellowstone A-Prime)).